A 208-amino-acid chain; its full sequence is Large ribosomal subunit protein bL25 (208 aa).

Residues valine 184–aspartate 208 form a disordered region. Residues serine 187 to aspartate 208 show a composition bias toward low complexity.

It belongs to the bacterial ribosomal protein bL25 family. CTC subfamily. In terms of assembly, part of the 50S ribosomal subunit; part of the 5S rRNA/L5/L18/L25 subcomplex. Contacts the 5S rRNA. Binds to the 5S rRNA independently of L5 and L18.

In terms of biological role, this is one of the proteins that binds to the 5S RNA in the ribosome where it forms part of the central protuberance. This Ehrlichia ruminantium (strain Gardel) protein is Large ribosomal subunit protein bL25.